The following is a 593-amino-acid chain: Glutamate decarboxylase 1 (593 aa).

A compositionally biased stretch (low complexity) spans 1-12; the sequence is MASSTPSPATSS. The disordered stretch occupies residues 1 to 22; it reads MASSTPSPATSSNAGADPNTTN. Residue Ser-77 is modified to Phosphoserine. 189–191 lines the 4-aminobutanoate pocket; that stretch reads QLS. At Lys-404 the chain carries N6-(pyridoxal phosphate)lysine. 4-aminobutanoate is bound at residue Arg-566.

The protein belongs to the group II decarboxylase family. As to quaternary structure, homodimer. Pyridoxal 5'-phosphate serves as cofactor.

It catalyses the reaction L-glutamate + H(+) = 4-aminobutanoate + CO2. Functionally, catalyzes the synthesis of the inhibitory neurotransmitter gamma-aminobutyric acid (GABA) with pyridoxal 5'-phosphate as cofactor. This Mus musculus (Mouse) protein is Glutamate decarboxylase 1 (Gad1).